The following is a 253-amino-acid chain: Ethylene-responsive transcription factor RAP2-11 (253 aa).

The segment at residues 21-78 is a DNA-binding region (AP2/ERF); that stretch reads KFVGVRQRPSGKWVAEIKDTTQKIRMWLGTFETAEEAARAYDEAACLLRGSNTRTNFA.

Belongs to the AP2/ERF transcription factor family. ERF subfamily.

The protein localises to the nucleus. Functionally, probably acts as a transcriptional activator. Binds to the GCC-box pathogenesis-related promoter element. May be involved in the regulation of gene expression by stress factors and by components of stress signal transduction pathways. The polypeptide is Ethylene-responsive transcription factor RAP2-11 (RAP2-11) (Arabidopsis thaliana (Mouse-ear cress)).